The primary structure comprises 489 residues: MSAAEPALAPLSPGAPVLVAGGGITGRAVLAALRRFGAAPTLCDDDPATLRGYVDSGVDTVSTSAAAERISRYALVVTSPGFAPTAPLPLAAAAAGVPVWGDVELAWRLDVAGHYGPPRRWLVVTGTNGKTTTTSMLHAMLTAAGRRSLLCGNIGSPVLDVLDQPAELLAVELSSFQLHWAPSLRPEGGAVLNIAEDHLDWHGTLADYAAAKARVLDGRVAVVGLDDSRAAALLSTARAPVRVGFRLGEPAAGELGVRGGQLVDRAFADDLTLLPVDSIPVPGPVGVLDALAAAALARCVDVPASPIAEAIVSFRVGRHRAEVVAVADGITYVDDSKATNPHAAEASVLAYPRVVWIAGGLLKGASVDAEVARMASWLVGAVLIGRDRREVAEALSRHAPDVPVVHVVTGEDAGMDATPVVFGANVTKVKHLGGDLGAAVMSAAVAAARDLAKPGDTVLLAPAGASFDQFAGYADRGEAFAAAVRAAIR.

126–132 (GTNGKTT) lines the ATP pocket.

The protein belongs to the MurCDEF family.

It localises to the cytoplasm. It catalyses the reaction UDP-N-acetyl-alpha-D-muramoyl-L-alanine + D-glutamate + ATP = UDP-N-acetyl-alpha-D-muramoyl-L-alanyl-D-glutamate + ADP + phosphate + H(+). The protein operates within cell wall biogenesis; peptidoglycan biosynthesis. In terms of biological role, cell wall formation. Catalyzes the addition of glutamate to the nucleotide precursor UDP-N-acetylmuramoyl-L-alanine (UMA). The chain is UDP-N-acetylmuramoylalanine--D-glutamate ligase from Mycolicibacterium paratuberculosis (strain ATCC BAA-968 / K-10) (Mycobacterium paratuberculosis).